A 221-amino-acid polypeptide reads, in one-letter code: GTP-binding nuclear protein Ran-1 (221 aa).

The 165-residue stretch at 10 to 174 folds into the Small GTPase Ran-type domain; the sequence is DYPSFKLVIV…LYLARKLAGD (165 aa). A GTP-binding site is contributed by 21–28; sequence DGGTGKTT. Positions 40-48 are switch-I; it reads KKYEPTIGV. GTP contacts are provided by residues glycine 71, 125–128, and 153–155; these read NKVD and SAK. A switch-II region spans residues 71-87; it reads GQEKFGGLRDGYYIHGQ.

This sequence belongs to the small GTPase superfamily. Ran family. As to quaternary structure, found in a nuclear export complex with RanGTP, exportin and pre-miRNA.

The protein resides in the nucleus. Functionally, GTP-binding protein involved in nucleocytoplasmic transport. Required for the import of protein into the nucleus and also for RNA export. Involved in chromatin condensation and control of cell cycle. In Oryza sativa subsp. indica (Rice), this protein is GTP-binding nuclear protein Ran-1 (RAN1).